Reading from the N-terminus, the 389-residue chain is Shewanella-like protein phosphatase 1 (389 aa).

The N-terminal 53 residues, 1–53, are a transit peptide targeting the chloroplast; sequence MASLYLNSLLPLPPSHPQKLLEPSSSSLLSTSNGNELALKPIVINGDPPTFVS. 4 residues coordinate Mn(2+): D64, H66, D102, and N137. H138 acts as the Proton donor in catalysis. 2 residues coordinate Mn(2+): H242 and H314.

The protein belongs to the metallophosphoesterase superfamily. SLP family. It depends on Mn(2+) as a cofactor. Expressed in rosettes leaves, shoots and flowers (at protein level).

It localises to the plastid. The protein resides in the chloroplast. Shows phosphatase activity, hydrolyzing the artificial substrate para-nitrophenylphosphate (pNPP) in vitro. In Arabidopsis thaliana (Mouse-ear cress), this protein is Shewanella-like protein phosphatase 1.